A 270-amino-acid chain; its full sequence is Regulatory protein RecX (270 aa).

This sequence belongs to the RecX family.

It is found in the cytoplasm. Modulates RecA activity. The sequence is that of Regulatory protein RecX from Bacillus cereus (strain 03BB102).